The chain runs to 229 residues: PKHD-type hydroxylase RPA3479 (229 aa).

In terms of domain architecture, Fe2OG dioxygenase spans 78-180; it reads QIFPPLFNRY…RVASFFWLQS (103 aa). Residues His-98, Asp-100, and His-161 each coordinate Fe cation. Arg-171 contacts 2-oxoglutarate.

Fe(2+) serves as cofactor. It depends on L-ascorbate as a cofactor.

This Rhodopseudomonas palustris (strain ATCC BAA-98 / CGA009) protein is PKHD-type hydroxylase RPA3479.